Consider the following 186-residue polypeptide: UPF0301 protein APL_0232 (186 aa).

This sequence belongs to the UPF0301 (AlgH) family.

This is UPF0301 protein APL_0232 from Actinobacillus pleuropneumoniae serotype 5b (strain L20).